The chain runs to 124 residues: UPF0344 protein OB1184 (124 aa).

Transmembrane regions (helical) follow at residues 3–23 (HMHI…LVMY), 33–53 (IIHM…GILT), 62–82 (MPIL…VAMM), and 104–124 (IALV…FLFI).

This sequence belongs to the UPF0344 family.

The protein localises to the cell membrane. This chain is UPF0344 protein OB1184, found in Oceanobacillus iheyensis (strain DSM 14371 / CIP 107618 / JCM 11309 / KCTC 3954 / HTE831).